The primary structure comprises 282 residues: Ribonuclease 3 (282 aa).

The 124-residue stretch at 18 to 141 (FVAFFKSLNI…LVAAIYEDLG (124 aa)) folds into the RNase III domain. Glu-59 provides a ligand contact to Mg(2+). Asp-63 is a catalytic residue. 2 residues coordinate Mg(2+): Asp-127 and Glu-130. Residue Glu-130 is part of the active site.

The protein belongs to the ribonuclease III family. Homodimer. Mg(2+) is required as a cofactor.

The protein localises to the cytoplasm. The enzyme catalyses Endonucleolytic cleavage to 5'-phosphomonoester.. Digests double-stranded RNA. Involved in the processing of primary rRNA transcript to yield the immediate precursors to the large and small rRNAs (23S and 16S). Processes some mRNAs, and tRNAs when they are encoded in the rRNA operon. Processes pre-crRNA and tracrRNA of type II CRISPR loci if present in the organism. This is Ribonuclease 3 from Mycoplasmoides pneumoniae (strain ATCC 15531 / DSM 23978 / CIP 103766 / NBRC 14401 / NCTC 10119 / FH) (Mycoplasma pneumoniae).